The following is a 211-amino-acid chain: Uracil phosphoribosyltransferase (211 aa).

5-phospho-alpha-D-ribose 1-diphosphate is bound by residues arginine 77, arginine 102, and 129–137 (DPMLATGGS). Uracil-binding positions include isoleucine 192 and 197 to 199 (GDA). Aspartate 198 is a binding site for 5-phospho-alpha-D-ribose 1-diphosphate.

It belongs to the UPRTase family. It depends on Mg(2+) as a cofactor.

It carries out the reaction UMP + diphosphate = 5-phospho-alpha-D-ribose 1-diphosphate + uracil. It participates in pyrimidine metabolism; UMP biosynthesis via salvage pathway; UMP from uracil: step 1/1. Allosterically activated by GTP. Catalyzes the conversion of uracil and 5-phospho-alpha-D-ribose 1-diphosphate (PRPP) to UMP and diphosphate. The chain is Uracil phosphoribosyltransferase from Corynebacterium diphtheriae (strain ATCC 700971 / NCTC 13129 / Biotype gravis).